The chain runs to 288 residues: uncharacterized protein (288 aa).

This is an uncharacterized protein from Methanocaldococcus jannaschii (strain ATCC 43067 / DSM 2661 / JAL-1 / JCM 10045 / NBRC 100440) (Methanococcus jannaschii).